A 230-amino-acid chain; its full sequence is Large ribosomal subunit protein uL1 (230 aa).

This sequence belongs to the universal ribosomal protein uL1 family. As to quaternary structure, part of the 50S ribosomal subunit.

In terms of biological role, binds directly to 23S rRNA. The L1 stalk is quite mobile in the ribosome, and is involved in E site tRNA release. Protein L1 is also a translational repressor protein, it controls the translation of the L11 operon by binding to its mRNA. The protein is Large ribosomal subunit protein uL1 of Paramagnetospirillum magneticum (strain ATCC 700264 / AMB-1) (Magnetospirillum magneticum).